The sequence spans 579 residues: ATP-dependent lipid A-core flippase (579 aa).

The next 4 membrane-spanning stretches (helical) occupy residues 24 to 44 (FLAA…LAEM), 61 to 81 (LMLP…TFLG), 147 to 167 (LFVI…TLIF), and 253 to 273 (LLVA…ALMA). The ABC transmembrane type-1 domain maps to 25 to 306 (LAAVVGYAIY…LTEVNSTIQK (282 aa)). The ABC transporter domain maps to 338 to 573 (VRFEGVRFRY…DGAYAALHQL (236 aa)). 372–379 (GRSGSGKS) is an ATP binding site.

Belongs to the ABC transporter superfamily. Lipid exporter (TC 3.A.1.106) family. In terms of assembly, homodimer.

The protein resides in the cell inner membrane. The catalysed reaction is ATP + H2O + lipid A-core oligosaccharideSide 1 = ADP + phosphate + lipid A-core oligosaccharideSide 2.. Functionally, involved in lipopolysaccharide (LPS) biosynthesis. Translocates lipid A-core from the inner to the outer leaflet of the inner membrane. Transmembrane domains (TMD) form a pore in the inner membrane and the ATP-binding domain (NBD) is responsible for energy generation. This chain is ATP-dependent lipid A-core flippase, found in Chromohalobacter salexigens (strain ATCC BAA-138 / DSM 3043 / CIP 106854 / NCIMB 13768 / 1H11).